The following is a 499-amino-acid chain: Probable alginate O-acetylase AlgI (499 aa).

11 consecutive transmembrane segments (helical) span residues 7–25 (VFLFLFLPLFLGLYYLSPA), 40–62 (YAWWRIDFLGLFAAVTVFNYWIG), 78–100 (WLTLGVVVDLCVLGYFKYANFGV), 115–137 (FVVTHILLPIGISFYVFESISYI), 150–172 (NLVDFAAFVAIFPHLIAGPVLRF), 239–261 (LYFDFSGYSDMAIGLGLMIGFRF), 312–334 (ILTMLLGGLWHGANWTFIIWGAW), 354–373 (IRPLRWVFAFLLVMVGWVIF), 380–397 (VAWRMYAAMFSFGDWTLS), 407–429 (LQIATLLLAYVVIAVYGIRQFYA), and 475–497 (VLLLFAASVLKLSAQSFSPFLYF). The active site involves histidine 322.

This sequence belongs to the membrane-bound acyltransferase family.

It localises to the cell inner membrane. Its pathway is glycan biosynthesis; alginate biosynthesis. Together with AlgJ and AlgF, forms an inner membrane complex which probably interacts with the alginate polymerization-transport complex and adds acetyl groups at the O-2 and O-3 positions of mannuronate residues. Acetylation of alginate increases cyst resistance to desiccation. The protein is Probable alginate O-acetylase AlgI (algI) of Azotobacter vinelandii.